A 414-amino-acid chain; its full sequence is NADH-ubiquinone oxidoreductase chain 4 (414 aa).

The next 10 helical transmembrane spans lie at 18–38, 47–67, 96–116, 126–146, 160–180, 188–208, 216–236, 254–274, 293–313, and 375–395; these read LVQLYIVYEASLIPMVIMIGV, IAAFQILIYTLIGSIFMLMSI, IIFIGFFIGFAVKIPIAPLHL, PTAGSVLLAGILLKLGGYGYI, YFPIIGGICLISILYTGIATL, IVAYSSISHMNVIVLGLFSGV, IILMIGHGIVSGGLFLCIGVI, MMPIMAILFFLLVLGNIAFPI, IIIAFFSALSMIITAIYSFWL, and VNIFEFVSIGLMVILMLIVGM.

The protein belongs to the complex I subunit 4 family.

The protein localises to the mitochondrion membrane. The catalysed reaction is a ubiquinone + NADH + 5 H(+)(in) = a ubiquinol + NAD(+) + 4 H(+)(out). In terms of biological role, core subunit of the mitochondrial membrane respiratory chain NADH dehydrogenase (Complex I) that is believed to belong to the minimal assembly required for catalysis. Complex I functions in the transfer of electrons from NADH to the respiratory chain. The immediate electron acceptor for the enzyme is believed to be ubiquinone. The chain is NADH-ubiquinone oxidoreductase chain 4 (nad4) from Dictyostelium citrinum (Slime mold).